Here is a 592-residue protein sequence, read N- to C-terminus: Craniofacial development protein 2 (592 aa).

A compositionally biased stretch (basic and acidic residues) spans 1-16 (MEEFDSKDISTSKDED). 2 disordered regions span residues 1–225 (MEEF…KGQS) and 499–592 (VTNE…DCNN). Residues 25–42 (HEDDINELVKEDEVDGEE) show a composition bias toward acidic residues. Basic and acidic residues-rich tracts occupy residues 78 to 108 (SRES…RQEE) and 147 to 162 (KVEE…EVKL). A compositionally biased stretch (polar residues) spans 175–184 (LTQQGRLSGR). Basic and acidic residues-rich tracts occupy residues 185-207 (TSED…RRAD), 508-523 (EEAK…EKPE), 552-562 (SVFKQDEKDKP), and 580-592 (EKCD…DCNN). Positions 499–578 (VTNEEDATNE…SVPSLPAGSG (80 aa)) are hydrophilic.

Post-translationally, phosphorylated by CK2 (casein kinase II) in vitro. In terms of tissue distribution, expressed in liver and lung with higher expression in brain.

It localises to the cytoplasm. Its subcellular location is the nucleus. This Bos taurus (Bovine) protein is Craniofacial development protein 2 (CFDP2).